The following is a 340-amino-acid chain: Oxygen-dependent coproporphyrinogen-III oxidase (340 aa).

Positions 1-14 (MTVSPTTQPQTNHS) are enriched in polar residues. The tract at residues 1-22 (MTVSPTTQPQTNHSLPPADAKQ) is disordered. Ser-109 is a substrate binding site. A divalent metal cation-binding residues include His-113 and His-123. The active-site Proton donor is His-123. 125–127 (NYR) contacts substrate. Positions 157 and 187 each coordinate a divalent metal cation. The tract at residues 278-313 (YVEFNLVYDRGTIFGLQTNGRTESILMSLPPLVRWQ) is important for dimerization. 296–298 (NGR) lines the substrate pocket.

It belongs to the aerobic coproporphyrinogen-III oxidase family. Homodimer. It depends on a divalent metal cation as a cofactor.

It is found in the cytoplasm. The enzyme catalyses coproporphyrinogen III + O2 + 2 H(+) = protoporphyrinogen IX + 2 CO2 + 2 H2O. Its pathway is porphyrin-containing compound metabolism; protoporphyrin-IX biosynthesis; protoporphyrinogen-IX from coproporphyrinogen-III (O2 route): step 1/1. Involved in the heme and chlorophyll biosynthesis. Catalyzes the aerobic oxidative decarboxylation of propionate groups of rings A and B of coproporphyrinogen-III to yield the vinyl groups in protoporphyrinogen-IX. The sequence is that of Oxygen-dependent coproporphyrinogen-III oxidase from Synechocystis sp. (strain ATCC 27184 / PCC 6803 / Kazusa).